The following is a 388-amino-acid chain: LL-diaminopimelate aminotransferase (388 aa).

2 residues coordinate substrate: Tyr16 and Gly41. Residues Tyr70, 104-105 (SK), Tyr129, Asn179, Tyr210, and 239-241 (SLS) contribute to the pyridoxal 5'-phosphate site. Residues Lys105, Tyr129, and Asn179 each coordinate substrate. Lys242 bears the N6-(pyridoxal phosphate)lysine mark. Pyridoxal 5'-phosphate is bound at residue Arg250. Arg368 is a substrate binding site.

This sequence belongs to the class-I pyridoxal-phosphate-dependent aminotransferase family. LL-diaminopimelate aminotransferase subfamily. In terms of assembly, homodimer. The cofactor is pyridoxal 5'-phosphate.

It carries out the reaction (2S,6S)-2,6-diaminopimelate + 2-oxoglutarate = (S)-2,3,4,5-tetrahydrodipicolinate + L-glutamate + H2O + H(+). It functions in the pathway amino-acid biosynthesis; L-lysine biosynthesis via DAP pathway; LL-2,6-diaminopimelate from (S)-tetrahydrodipicolinate (aminotransferase route): step 1/1. Involved in the synthesis of meso-diaminopimelate (m-DAP or DL-DAP), required for both lysine and peptidoglycan biosynthesis. Catalyzes the direct conversion of tetrahydrodipicolinate to LL-diaminopimelate. This Oleidesulfovibrio alaskensis (strain ATCC BAA-1058 / DSM 17464 / G20) (Desulfovibrio alaskensis) protein is LL-diaminopimelate aminotransferase.